We begin with the raw amino-acid sequence, 92 residues long: Trp operon repressor homolog (92 aa).

A DNA-binding region spans residues 56-79 (QREVASKLGVSITKITRGAANLQD).

It belongs to the TrpR family. Homodimer.

It is found in the cytoplasm. In terms of biological role, this protein is an aporepressor. When complexed with L-tryptophan it binds the operator region of the trp operon and prevents the initiation of transcription. The chain is Trp operon repressor homolog from Xylella fastidiosa (strain M23).